Reading from the N-terminus, the 577-residue chain is Moesin (577 aa).

Positions proline 2 to arginine 295 constitute an FERM domain. Serine 74 carries the post-translational modification Phosphoserine. Residue lysine 79 is modified to N6-acetyllysine. Lysine 83 is modified (N6-succinyllysine). The short motif at isoleucine 115–glutamate 120 is the [IL]-x-C-x-x-[DE] motif element. Position 116 is a phosphotyrosine (tyrosine 116). Cysteine 117 is subject to S-nitrosocysteine. Lysine 139 and lysine 165 each carry N6-acetyllysine. Disordered stretches follow at residues leucine 322 to arginine 342, threonine 358 to glutamine 453, and serine 468 to methionine 549. Residues threonine 358–glutamate 401 show a composition bias toward basic and acidic residues. Serine 407 carries the post-translational modification Phosphoserine. Basic and acidic residues-rich tracts occupy residues lysine 438 to glutamine 447 and alanine 492 to glutamine 519. Residue serine 527 is modified to Phosphoserine. Residues asparagine 531–methionine 549 show a composition bias toward basic and acidic residues. Threonine 558 carries the post-translational modification Phosphothreonine; by ROCK2 and STK10.

As to quaternary structure, in resting T-cells, part of a PAG1-NHERF1-MSN complex which is disrupted upon TCR activation. Interacts with NHERF1. Interacts with PPP1R16B. Interacts with PDZD8. Interacts with SELPLG and SYK; these interactions mediate the activation of SYK by SELPLG. Interacts with PDPN (via cytoplasmic domain); this interaction activates RHOA and promotes epithelial-mesenchymal transition. Interacts with SPN/CD43 cytoplasmic tail. Interacts with CD44. Interacts with ICAM2. Interacts with ICAM3 (via C-terminus). Interacts with PDZD8. Interacts with F-actin. Interacts with CD46. Interacts with PTPN6. Phosphorylation on Thr-558 is crucial for the formation of microvilli-like structures. Phosphorylation by ROCK2 suppresses the head-to-tail association of the N-terminal and C-terminal halves resulting in an opened conformation which is capable of actin and membrane-binding. Phosphorylation on Thr-558 by STK10 negatively regulates lymphocyte migration and polarization. In terms of processing, S-nitrosylation of Cys-117 is induced by interferon-gamma and oxidatively-modified low-densitity lipoprotein (LDL(ox)) implicating the iNOS-S100A8/9 transnitrosylase complex.

The protein resides in the cell membrane. Its subcellular location is the cytoplasm. The protein localises to the cytoskeleton. It localises to the apical cell membrane. It is found in the cell projection. The protein resides in the microvillus membrane. Its subcellular location is the microvillus. A head-to-tail association, of the N-terminal and C-terminal halves results in a closed conformation (inactive form) which is incapable of actin or membrane-binding. Functionally, ezrin-radixin-moesin (ERM) family protein that connects the actin cytoskeleton to the plasma membrane and thereby regulates the structure and function of specific domains of the cell cortex. Tethers actin filaments by oscillating between a resting and an activated state providing transient interactions between moesin and the actin cytoskeleton. Once phosphorylated on its C-terminal threonine, moesin is activated leading to interaction with F-actin and cytoskeletal rearrangement. These rearrangements regulate many cellular processes, including cell shape determination, membrane transport, and signal transduction. The role of moesin is particularly important in immunity acting on both T and B-cells homeostasis and self-tolerance, regulating lymphocyte egress from lymphoid organs. Modulates phagolysosomal biogenesis in macrophages. Participates also in immunologic synapse formation. The polypeptide is Moesin (Rattus norvegicus (Rat)).